The chain runs to 143 residues: SsrA-binding protein (143 aa).

Belongs to the SmpB family.

The protein resides in the cytoplasm. In terms of biological role, required for rescue of stalled ribosomes mediated by trans-translation. Binds to transfer-messenger RNA (tmRNA), required for stable association of tmRNA with ribosomes. tmRNA and SmpB together mimic tRNA shape, replacing the anticodon stem-loop with SmpB. tmRNA is encoded by the ssrA gene; the 2 termini fold to resemble tRNA(Ala) and it encodes a 'tag peptide', a short internal open reading frame. During trans-translation Ala-aminoacylated tmRNA acts like a tRNA, entering the A-site of stalled ribosomes, displacing the stalled mRNA. The ribosome then switches to translate the ORF on the tmRNA; the nascent peptide is terminated with the 'tag peptide' encoded by the tmRNA and targeted for degradation. The ribosome is freed to recommence translation, which seems to be the essential function of trans-translation. This Deinococcus geothermalis (strain DSM 11300 / CIP 105573 / AG-3a) protein is SsrA-binding protein.